Reading from the N-terminus, the 308-residue chain is Coenzyme PQQ synthesis protein B (308 aa).

The protein belongs to the PqqB family.

It functions in the pathway cofactor biosynthesis; pyrroloquinoline quinone biosynthesis. Functionally, may be involved in the transport of PQQ or its precursor to the periplasm. This is Coenzyme PQQ synthesis protein B from Klebsiella pneumoniae subsp. pneumoniae (strain ATCC 700721 / MGH 78578).